The chain runs to 951 residues: Valine--tRNA ligase (951 aa).

A 'HIGH' region motif is present at residues 42–52 (PNVTGSLHMGH). The short motif at 554–558 (KMSKS) is the 'KMSKS' region element. Lysine 557 lines the ATP pocket. Positions 882–944 (LINKDDELAR…AEAKAKLIEQ (63 aa)) form a coiled coil.

Belongs to the class-I aminoacyl-tRNA synthetase family. ValS type 1 subfamily. In terms of assembly, monomer.

It localises to the cytoplasm. The catalysed reaction is tRNA(Val) + L-valine + ATP = L-valyl-tRNA(Val) + AMP + diphosphate. Catalyzes the attachment of valine to tRNA(Val). As ValRS can inadvertently accommodate and process structurally similar amino acids such as threonine, to avoid such errors, it has a 'posttransfer' editing activity that hydrolyzes mischarged Thr-tRNA(Val) in a tRNA-dependent manner. The polypeptide is Valine--tRNA ligase (Salmonella choleraesuis (strain SC-B67)).